Consider the following 1446-residue polypeptide: DNA-directed RNA polymerase subunit beta'' (1446 aa).

4 residues coordinate Zn(2+): C217, C285, C292, and C295.

This sequence belongs to the RNA polymerase beta' chain family. RpoC2 subfamily. In plastids the minimal PEP RNA polymerase catalytic core is composed of four subunits: alpha, beta, beta', and beta''. When a (nuclear-encoded) sigma factor is associated with the core the holoenzyme is formed, which can initiate transcription. It depends on Zn(2+) as a cofactor.

Its subcellular location is the plastid. The protein resides in the chloroplast. It catalyses the reaction RNA(n) + a ribonucleoside 5'-triphosphate = RNA(n+1) + diphosphate. Its function is as follows. DNA-dependent RNA polymerase catalyzes the transcription of DNA into RNA using the four ribonucleoside triphosphates as substrates. The sequence is that of DNA-directed RNA polymerase subunit beta'' from Thalassiosira pseudonana (Marine diatom).